A 157-amino-acid chain; its full sequence is 2-C-methyl-D-erythritol 2,4-cyclodiphosphate synthase (157 aa).

D8 and H10 together coordinate a divalent metal cation. 4-CDP-2-C-methyl-D-erythritol 2-phosphate-binding positions include 8 to 10 and 34 to 35; these read DVH and HS. H42 is an a divalent metal cation binding site. 4-CDP-2-C-methyl-D-erythritol 2-phosphate-binding positions include 56-58, 61-65, 100-106, 132-135, F139, and R142; these read DIG, FPDTD, AQAPKMA, and TTTE.

It belongs to the IspF family. As to quaternary structure, homotrimer. Requires a divalent metal cation as cofactor.

The enzyme catalyses 4-CDP-2-C-methyl-D-erythritol 2-phosphate = 2-C-methyl-D-erythritol 2,4-cyclic diphosphate + CMP. It participates in isoprenoid biosynthesis; isopentenyl diphosphate biosynthesis via DXP pathway; isopentenyl diphosphate from 1-deoxy-D-xylulose 5-phosphate: step 4/6. Involved in the biosynthesis of isopentenyl diphosphate (IPP) and dimethylallyl diphosphate (DMAPP), two major building blocks of isoprenoid compounds. Catalyzes the conversion of 4-diphosphocytidyl-2-C-methyl-D-erythritol 2-phosphate (CDP-ME2P) to 2-C-methyl-D-erythritol 2,4-cyclodiphosphate (ME-CPP) with a corresponding release of cytidine 5-monophosphate (CMP). The polypeptide is 2-C-methyl-D-erythritol 2,4-cyclodiphosphate synthase (Azotobacter vinelandii (strain DJ / ATCC BAA-1303)).